The chain runs to 724 residues: Propionyl-CoA carboxylase alpha chain, mitochondrial (724 aa).

Residues 48–495 (KFDKILIANR…TTKYLPEVYP (448 aa)) form the Biotin carboxylation domain. ATP contacts are provided by residues lysine 163, 195–256 (SRDI…PRHI), glutamate 247, and asparagine 282. The 198-residue stretch at 167-364 (KKIATAARVS…IVQQMLRVSY (198 aa)) folds into the ATP-grasp domain. Mg(2+) is bound by residues glutamate 322, glutamate 335, and asparagine 337. Residues glutamate 322, glutamate 335, and asparagine 337 each coordinate Mn(2+). Arginine 339 is a catalytic residue. Phenylalanine 395 serves as a coordination point for biotin. The region spanning 649–724 (KAKVDLSTVV…DEGEVLVELE (76 aa)) is the Biotinyl-binding domain. Lysine 690 is modified (N6-biotinyllysine).

The holoenzyme is a dodecamer composed of 6 alpha subunits and 6 beta subunits. Interacts with sir-2.2 and sir-2.3. Biotin is required as a cofactor. It depends on Mg(2+) as a cofactor. The cofactor is Mn(2+). Post-translationally, the biotin cofactor is covalently attached to the C-terminal biotinyl-binding domain and is required for the catalytic activity.

Its subcellular location is the mitochondrion matrix. The catalysed reaction is propanoyl-CoA + hydrogencarbonate + ATP = (S)-methylmalonyl-CoA + ADP + phosphate + H(+). It carries out the reaction butanoyl-CoA + hydrogencarbonate + ATP = (2S)-ethylmalonyl-CoA + ADP + phosphate + H(+). It participates in metabolic intermediate metabolism; propanoyl-CoA degradation; succinyl-CoA from propanoyl-CoA: step 1/3. This is one of the 2 subunits of the biotin-dependent propionyl-CoA carboxylase (PCC), a mitochondrial enzyme involved in the catabolism of odd chain fatty acids, branched-chain amino acids isoleucine, threonine, methionine, and valine and other metabolites. Propionyl-CoA carboxylase catalyzes the carboxylation of propionyl-CoA/propanoyl-CoA to D-methylmalonyl-CoA/(S)-methylmalonyl-CoA. Within the holoenzyme, the alpha subunit catalyzes the ATP-dependent carboxylation of the biotin carried by the biotin carboxyl carrier (BCC) domain, while the beta subunit then transfers the carboxyl group from carboxylated biotin to propionyl-CoA. Propionyl-CoA carboxylase also significantly acts on butyryl-CoA/butanoyl-CoA, which is converted to ethylmalonyl-CoA/(2S)-ethylmalonyl-CoA. Other alternative minor substrates include (2E)-butenoyl-CoA/crotonoyl-CoA. This chain is Propionyl-CoA carboxylase alpha chain, mitochondrial (pcca-1), found in Caenorhabditis elegans.